The chain runs to 2281 residues: Protein Ycf2 (2281 aa).

Gly-1635–Ser-1642 lines the ATP pocket.

This sequence belongs to the Ycf2 family.

It is found in the plastid. The protein resides in the chloroplast stroma. In terms of biological role, probable ATPase of unknown function. Its presence in a non-photosynthetic plant (Epifagus virginiana) and experiments in tobacco indicate that it has an essential function which is probably not related to photosynthesis. This Coffea arabica (Arabian coffee) protein is Protein Ycf2.